The sequence spans 215 residues: Phosphoenolpyruvate guanylyltransferase (215 aa).

3 residues coordinate phosphoenolpyruvate: T144, G159, and S162.

This sequence belongs to the CofC family.

It catalyses the reaction phosphoenolpyruvate + GTP + H(+) = enolpyruvoyl-2-diphospho-5'-guanosine + diphosphate. Its pathway is cofactor biosynthesis; coenzyme F420 biosynthesis. In terms of biological role, guanylyltransferase that catalyzes the activation of phosphoenolpyruvate (PEP) as enolpyruvoyl-2-diphospho-5'-guanosine, via the condensation of PEP with GTP. It is involved in the biosynthesis of coenzyme F420, a hydride carrier cofactor. The chain is Phosphoenolpyruvate guanylyltransferase from Geodermatophilus obscurus (strain ATCC 25078 / DSM 43160 / JCM 3152 / CCUG 61914 / KCC A-0152 / KCTC 9177 / NBRC 13315 / NRRL B-3577 / G-20).